Here is a 339-residue protein sequence, read N- to C-terminus: Polyhydroxybutyrate depolymerase (339 aa).

An N-terminal signal peptide occupies residues 1–20; the sequence is MFDSVKIAWLVALGAAQVAA. Residue Ser39 is part of the active site. Cys70 and Cys79 form a disulfide bridge. The active site involves Asp121. The N-linked (GlcNAc...) asparagine glycan is linked to Asn144. The active site involves His155. 3 disulfide bridges follow: Cys169-Cys180, Cys234-Cys241, and Cys250-Cys304. Trp307 lines the (3R)-hydroxybutanoate trimer pocket.

It belongs to the carbohydrate esterase 1 (CE1) family.

Its subcellular location is the secreted. The enzyme catalyses [(3R)-hydroxybutanoate](n) + H2O = [(3R)-hydroxybutanoate](n-1) + (R)-3-hydroxybutanoate + H(+). With respect to regulation, the enzyme is completely inhibited by dithiothreitol (DTT) and diisopropylfluorophosphate (DFP), and partially inhibited by HgCl(2) and by enzyme3-(p-nitrophenoxy)propane (EPNP). Activity is not affected by N-ethylmaleimide (NEM) or phenylmethylsulfonyl fluoride (PMSF). Esterase involved in the hydrolysis of polyhydroxybutyrate, a microbial polyester that can be produced from renewable resources. The chain is Polyhydroxybutyrate depolymerase from Talaromyces funiculosus (Fruitlet core rot fungus).